The primary structure comprises 588 residues: Catechol oxidase B, chloroplastic (588 aa).

The N-terminal 88 residues, 1–88 (SSSSTTTIPL…AANLAPLASA (88 aa)), are a transit peptide targeting the chloroplast. Disulfide bonds link Cys-99-Cys-115 and Cys-114-Cys-181. 6 residues coordinate Cu cation: His-180, His-198, His-207, His-329, His-333, and His-364. The 2'-(S-cysteinyl)-histidine (Cys-His) cross-link spans 184 to 198 (CNGAYKVGGKELQVH).

The protein belongs to the tyrosinase family. It depends on Cu(2+) as a cofactor.

It is found in the plastid. Its subcellular location is the chloroplast thylakoid lumen. It carries out the reaction 2 catechol + O2 = 2 1,2-benzoquinone + 2 H2O. Its function is as follows. Catalyzes the oxidation of mono- and o-diphenols to o-diquinones. In Solanum tuberosum (Potato), this protein is Catechol oxidase B, chloroplastic.